The chain runs to 217 residues: uncharacterized protein (217 aa).

The next 2 membrane-spanning stretches (helical) occupy residues Leu151–Phe171 and Ile177–Phe197.

It localises to the mitochondrion membrane. This is an uncharacterized protein from Schizosaccharomyces pombe (strain 972 / ATCC 24843) (Fission yeast).